The following is a 135-amino-acid chain: Fluoride-specific ion channel FluC (135 aa).

Transmembrane regions (helical) follow at residues 12-32, 42-62, 70-90, and 106-126; these read FLVI…LGLS, LGTL…VGIF, LAWK…FSTF, and AIGL…LGLL. Na(+)-binding residues include Gly82 and Thr85.

The protein belongs to the fluoride channel Fluc/FEX (TC 1.A.43) family.

It localises to the cell inner membrane. The enzyme catalyses fluoride(in) = fluoride(out). Na(+) is not transported, but it plays an essential structural role and its presence is essential for fluoride channel function. Functionally, fluoride-specific ion channel. Important for reducing fluoride concentration in the cell, thus reducing its toxicity. This is Fluoride-specific ion channel FluC from Dechloromonas aromatica (strain RCB).